The primary structure comprises 102 residues: Carboxysome shell protein CcmK3 (102 aa).

Residues Ala-4–Pro-90 enclose the BMC domain.

It belongs to the bacterial microcompartments protein family. CcmK subfamily. As to quaternary structure, interacts stably with CcmK4, probably forms heterohexamers with a 1:2 CcmK3:CcmK4 stoichiometry. Bulky residues in the pore region probably preclude the formation of homohexamers by this subunit.

The protein resides in the carboxysome. Functionally, a non-essential, minor shell protein of the carboxysome, a polyhedral inclusion where RuBisCO (ribulose bisphosphate carboxylase, rbcL-rbcS) is sequestered. Hexamers form sheets that form the facets of the polyhedral carboxysome. In PCC 7942 there are several CcmK paralogs with presumably functional differences. This subunit probably only makes heterohexamers with CcmK4. The CcmK3-CcmK4 heterohexmers have been suggested to cap other hexamers, perhaps to alter metabolite flux. The polypeptide is Carboxysome shell protein CcmK3 (Synechococcus elongatus (strain ATCC 33912 / PCC 7942 / FACHB-805) (Anacystis nidulans R2)).